A 24-amino-acid chain; its full sequence is 47 kDa cell wall protein (24 aa).

It is found in the secreted. It localises to the cell wall. The chain is 47 kDa cell wall protein from Nicotiana tabacum (Common tobacco).